We begin with the raw amino-acid sequence, 141 residues long: uncharacterized protein (141 aa).

Residues Arg-4–Lys-139 form the HTH marR-type domain. Residues Val-53 to Glu-76 constitute a DNA-binding region (H-T-H motif).

This is an uncharacterized protein from Bacillus subtilis (strain 168).